Reading from the N-terminus, the 155-residue chain is Acyl-CoA-binding domain-containing protein 3 (155 aa).

An ACB domain is found at 3–88; sequence LQEDFEEYAE…VKQLQEEAAA (86 aa). Residues lysine 15, 30-34, lysine 56, and tyrosine 75 contribute to the an acyl-CoA site; that span reads YGLYK.

It belongs to the ACBP family. As to expression, highly expressed in leaves. Expressed at low levels in roots and seeds.

It localises to the cytoplasm. The protein resides in the cytosol. Its function is as follows. Binds medium- and long-chain acyl-CoA esters with high affinity. Can interact in vitro with linolenoyl-CoA. Binds phosphatidic acid (PA) and phosphatidylcholine (PC) in vitro. May play a role in the biosynthesis of phospholipids. This Oryza sativa subsp. japonica (Rice) protein is Acyl-CoA-binding domain-containing protein 3.